Reading from the N-terminus, the 152-residue chain is Lipoprotein signal peptidase (152 aa).

Helical transmembrane passes span 55–75 (NKMW…VFYM) and 85–105 (LGIS…DRVF). Catalysis depends on residues Asp-111 and Asp-129. Residues 124–144 (VFNIADSALCIGVVLIIIQTL) form a helical membrane-spanning segment.

The protein belongs to the peptidase A8 family.

Its subcellular location is the cell membrane. The catalysed reaction is Release of signal peptides from bacterial membrane prolipoproteins. Hydrolyzes -Xaa-Yaa-Zaa-|-(S,diacylglyceryl)Cys-, in which Xaa is hydrophobic (preferably Leu), and Yaa (Ala or Ser) and Zaa (Gly or Ala) have small, neutral side chains.. It functions in the pathway protein modification; lipoprotein biosynthesis (signal peptide cleavage). Its function is as follows. This protein specifically catalyzes the removal of signal peptides from prolipoproteins. The protein is Lipoprotein signal peptidase of Bacillus cereus (strain B4264).